A 422-amino-acid chain; its full sequence is MDSILVKGNGELRGQIPIAGAKNACLALMPATLLSDEPLTLTNAPRLSDIRTMTQLLQSLGAEVASLQGGQVLALSSHALTDHRADYDIVRKMRASILVLGPMLARDGHAVVSLPGGCAIGARPVDLHLKALEAMGAELDLRDGYIHAKAPAGGLKGARVVFPLVSVGATENALMAATLAKGTTVLENAAREPEIVDLARCLRRMGAQIEGEGSSTITIEGVDRLGGATHPVVTDRIELGTYMLAPAICGGEVELLGGRIELVGAFCEKLDAAGISVEETERGLRVARRNGRVKAVDVMTEPFPGFPTDLQAQMMALLCTAEGTSVLEERIFENRFMHAPELIRMGARIEVHGGTATVTGVEKLRGAPVMATDLRASVSLILAGLAAEGETIVSRVYHLDRGYERVEEKLSACGAQIRRIPG.

Position 22 to 23 (22 to 23 (KN)) interacts with phosphoenolpyruvate. Arg94 is a binding site for UDP-N-acetyl-alpha-D-glucosamine. The active-site Proton donor is the Cys118. Cys118 bears the 2-(S-cysteinyl)pyruvic acid O-phosphothioketal mark. Residues 123–127 (RPVDL), Asp309, and Ile331 contribute to the UDP-N-acetyl-alpha-D-glucosamine site.

It belongs to the EPSP synthase family. MurA subfamily.

The protein localises to the cytoplasm. The enzyme catalyses phosphoenolpyruvate + UDP-N-acetyl-alpha-D-glucosamine = UDP-N-acetyl-3-O-(1-carboxyvinyl)-alpha-D-glucosamine + phosphate. The protein operates within cell wall biogenesis; peptidoglycan biosynthesis. In terms of biological role, cell wall formation. Adds enolpyruvyl to UDP-N-acetylglucosamine. In Cereibacter sphaeroides (strain ATCC 17029 / ATH 2.4.9) (Rhodobacter sphaeroides), this protein is UDP-N-acetylglucosamine 1-carboxyvinyltransferase.